A 326-amino-acid chain; its full sequence is Pyruvate dehydrogenase E1 component subunit alpha (326 aa).

In terms of assembly, heterodimer of an alpha and a beta chain. Thiamine diphosphate is required as a cofactor.

The catalysed reaction is N(6)-[(R)-lipoyl]-L-lysyl-[protein] + pyruvate + H(+) = N(6)-[(R)-S(8)-acetyldihydrolipoyl]-L-lysyl-[protein] + CO2. Functionally, the pyruvate dehydrogenase complex catalyzes the overall conversion of pyruvate to acetyl-CoA and CO(2). It contains multiple copies of three enzymatic components: pyruvate dehydrogenase (E1), dihydrolipoamide acetyltransferase (E2) and lipoamide dehydrogenase (E3). The protein is Pyruvate dehydrogenase E1 component subunit alpha (pdhA) of Rickettsia prowazekii (strain Madrid E).